A 420-amino-acid polypeptide reads, in one-letter code: MRWRIIQVQYCFLLVPCMLTALEAVPIDVDKTKVHNTEPVENARIEPPDTGLYYDEYLKQVIEVLETDPHFREKLQKADIEEIRSGRLSQELDLVSHKVRTRLDELKRQEVGRLRMLIKAKLDALQDTGMNHHLLLKQFEHLNHQNPNTFESRDLDMLIKAATADLEQYDRTRHEEFKKYEMMKEHERREYLKTLSEEKRKEEESKFEEMKRKHEDHPKVNHPGSKDQLKEVWEETDGLDPNDFDPKTFFKLHDVNNDGFLDEQELEALFTRELEKVYNPQNAEDDMIEMEEERLRMREHVMSEIDNNKDRLVTLEEFLRATEKKEFLEPDSWETLDQQQLFTEDELKEYESIIAIQENELKKRAEELQKQKEDLQRQHDHLEAQKQEYHQAVQHLEQKKLQQGIAPSGPAGELKFEPHT.

Positions 1–24 are cleaved as a signal peptide; that stretch reads MRWRIIQVQYCFLLVPCMLTALEA. A DNA-binding region spans residues 171 to 223; sequence RTRHEEFKKYEMMKEHERREYLKTLSEEKRKEEESKFEEMKRKHEDHPKVNHP. The segment at 193-225 is disordered; sequence KTLSEEKRKEEESKFEEMKRKHEDHPKVNHPGS. The interval 213–420 is binds to necdin; it reads KHEDHPKVNH…AGELKFEPHT (208 aa). 2 EF-hand domains span residues 241–276 and 293–328; these read PNDFDPKTFFKLHDVNNDGFLDEQELEALFTRELEK and ERLRMREHVMSEIDNNKDRLVTLEEFLRATEKKEFL. The Ca(2+) site is built by Asp-254, Asn-256, Asp-258, Glu-265, Asp-306, Asn-308, Asp-310, and Glu-317. Residues 304 to 334 carry the GBA motif; the sequence is EIDNNKDRLVTLEEFLRATEKKEFLEPDSWE. At Ser-332 the chain carries Phosphoserine. Over residues 365–389 the composition is skewed to basic and acidic residues; that stretch reads AEELQKQKEDLQRQHDHLEAQKQEY. A disordered region spans residues 365-420; that stretch reads AEELQKQKEDLQRQHDHLEAQKQEYHQAVQHLEQKKLQQGIAPSGPAGELKFEPHT.

Belongs to the nucleobindin family. Interacts (via GBA motif) with guanine nucleotide-binding protein G(i) alpha subunit GNAI3. Preferentially interacts with inactive rather than active GNAI3. Interaction with GNAI3 is inhibited when NUCB2 binds calcium, probably due to a conformational change which renders the GBA motif inaccessible. Binds to the postmitotic growth suppressor NDN; coexpression abolishes NUCB2 secretion. Interacts with MC4R. Found in liver, heart, thymus, muscle, intestine, kidney, lung, spleen and throughout the brain, in cerebral cortex, hippocampus, hypothalamus and medulla oblongata. Nucb2 and necdin levels were higher in postmitotic neurons.

The protein localises to the cytoplasm. It localises to the perikaryon. It is found in the endoplasmic reticulum. The protein resides in the golgi apparatus. Its subcellular location is the nucleus envelope. The protein localises to the membrane. It localises to the secreted. Its function is as follows. Calcium-binding protein which may have a role in calcium homeostasis. Acts as a non-receptor guanine nucleotide exchange factor which binds to and activates guanine nucleotide-binding protein (G-protein) alpha subunit GNAI3. Anorexigenic peptide, seems to play an important role in hypothalamic pathways regulating food intake and energy homeostasis, acting in a leptin-independent manner. May also exert hypertensive roles and modulate blood pressure through directly acting on peripheral arterial resistance. In intestinal epithelial cells, plays a role in the inhibition of hepatic glucose production via MC4R receptor leading to increased cyclic adenosine monophosphate (cAMP) levels and glucagon-like peptide 1 (GLP-1) secretion. The chain is Nucleobindin-2 (Nucb2) from Mus musculus (Mouse).